Here is a 660-residue protein sequence, read N- to C-terminus: Threonine--tRNA ligase (660 aa).

A TGS domain is found at 1–64; that stretch reads MSHSVSLTFP…TEGRIEIVTR (64 aa). A catalytic region spans residues 245 to 547; the sequence is DHRRLGREMD…LLENFAGHMP (303 aa). Zn(2+)-binding residues include C341, H392, and H524.

This sequence belongs to the class-II aminoacyl-tRNA synthetase family. Homodimer. Zn(2+) serves as cofactor.

The protein resides in the cytoplasm. It catalyses the reaction tRNA(Thr) + L-threonine + ATP = L-threonyl-tRNA(Thr) + AMP + diphosphate + H(+). Its function is as follows. Catalyzes the attachment of threonine to tRNA(Thr) in a two-step reaction: L-threonine is first activated by ATP to form Thr-AMP and then transferred to the acceptor end of tRNA(Thr). Also edits incorrectly charged L-seryl-tRNA(Thr). This is Threonine--tRNA ligase from Sinorhizobium medicae (strain WSM419) (Ensifer medicae).